A 1170-amino-acid chain; its full sequence is MNELNTVSTNSSDSTKNGGTSNSPDDMDSAAAASHAIKKRTKASRACDQCRKKKIKCDYKDEKGVCSNCQRNGDRCSFDRVPLKRGPSKGYTRSTSHPRTNEIQDHNNSRSYNTFDNSNNTLNNNTGNSGDNGINSNTVPSTPSRSNSVLLPPLTQYIPQAGGIPPSFQNPAIQSTMPAGNIGQQQFWKVPYHEFQHQRKGSIDSLQSDISVRTLNPNEQLSYNTVQQSPITNKHTNDSGNANGSVTGSGSASGSGGYWSFIRTSGLLAPTDDHNGEQTRRSSSIPSLLRNTSNSLLLGGQPQLPPPQQQSQPQAHQQKLQQGQNLYSYSQFSQQQPYNPSISSFGQFAANGFHSRQGSVASEAMSPSAPAMFTSTSTNPVNVAQQTQRPQGQQVPQFSSELDGNKRRQSAPVSVTLSTDRLNGNENNNGEINNNNGSNNSGSSKDTSQHSQESVTTPAALEASSPGSTPQRSTKKRRKSYVSKKTKPKRDSSISITSKDSAHPMTTSSTIAYGQISDVDLIDTYYEFIHVGFPIIPLNKTTLTSDLLLVNTQPISNIHEVNSYVILWFRNSLELLVRVALKQKPGGKFFDNIVGVALSPSNDNNKAGFTTATARDDAEKTRRDSHNEVQDTLEVQSVFIAALNECFQKIVDIHPKFRENNDQISPKIKVIYLSTFILLNYILAFVGYDNSFVLGMSVTIFNEFKLYKLLLFPEPDINDVKPPVDEEVSTGNGNTKTSEFEIGSESAGHMNPSNSPNSMDENISHYSVLFKRLYVLLSVFDSLQSCAFGGPKLLNISIQGSTERFFSNDLGSKWCLEQSQLRLKSVLQSLKLGELMSELTRNRISMNGNRKPGFDITNSSSLLSEYVETQPLSVAQLFCKLLIGKHNFINCLLSLYDSEAGVYSDLTLDLSSKIADSLCSLISIILQVLTLILRLNPTNSIDFNYRPPNPPANNPTVQEGPSAMGSSPVAGNLSAAPPSEGNPDFYKKLLGLKQDTGTILSDLCRGIISPFAIAILHEVYNITELVKQMPTSLISIMMTATTTQNTQDTKKSQDLVMKLSNSMNEVVQITSVLTMIKPFKIFEHELNKPIMSLTGGLSSTTRNDVMWPKSGQGLRESSVMKTLLDERRTSGTQPTTAPVAAEEPRLENVALENFVSIGWKLLDDSELGWY.

A compositionally biased stretch (polar residues) spans 1 to 22 (MNELNTVSTNSSDSTKNGGTSN). The interval 1-46 (MNELNTVSTNSSDSTKNGGTSNSPDDMDSAAAASHAIKKRTKASRA) is disordered. A DNA-binding region (zn(2)-C6 fungal-type) is located at residues 47-76 (CDQCRKKKIKCDYKDEKGVCSNCQRNGDRC). Positions 77 to 149 (SFDRVPLKRG…PSTPSRSNSV (73 aa)) are disordered. Residues 99-108 (RTNEIQDHNN) are compositionally biased toward basic and acidic residues. Residues 113–138 (NTFDNSNNTLNNNTGNSGDNGINSNT) show a composition bias toward low complexity. Residues 139-149 (VPSTPSRSNSV) are compositionally biased toward polar residues. Phosphoserine occurs at positions 202, 205, 208, and 229. Disordered regions lie at residues 226–254 (VQQS…SASG), 269–288 (APTD…IPSL), 293–323 (SNSL…LQQG), 384–506 (AQQT…HPMT), and 944–977 (NYRP…SAAP). Positions 239–250 (SGNANGSVTGSG) are enriched in low complexity. The span at 271–280 (TDDHNGEQTR) shows a compositional bias: basic and acidic residues. Residues Ser283 and Ser284 each carry the phosphoserine modification. Composition is skewed to low complexity over residues 293–302 (SNSLLLGGQP), 309–323 (QQSQ…LQQG), and 385–397 (QQTQ…QVPQ). 2 positions are modified to phosphoserine: Ser410 and Ser414. A compositionally biased stretch (polar residues) spans 411-422 (APVSVTLSTDRL). The segment covering 424–444 (GNENNNGEINNNNGSNNSGSS) has biased composition (low complexity). A compositionally biased stretch (polar residues) spans 445–457 (KDTSQHSQESVTT). The span at 473 to 488 (STKKRRKSYVSKKTKP) shows a compositional bias: basic residues. A compositionally biased stretch (polar residues) spans 493–506 (SISITSKDSAHPMT). Ser1130 bears the Phosphoserine mark.

This sequence belongs to the EDS1/RGT1 family. Glucose-induced phosphorylation regulates the DNA-binding activity. Hyperphosphorylation in cells growing on high levels of glucose does prevents DNA-binding and dephosphorylation restores DNA-binding ability.

The protein localises to the nucleus. Its subcellular location is the cytoplasm. In terms of biological role, glucose-responsive transcription factor that regulates expression of several glucose transporter (HXT) genes in response to glucose. In the absence of glucose, it functions as a transcriptional repressor, whereas high concentrations of glucose cause it to function as a transcriptional activator. In cells growing on low levels of glucose, has a neutral role, neither repressing nor activating transcription. Binds the consensus binding site sequence 5'-CGGANNA-3', of which multiple copies are present in all HXT promoters regulated by RGT1. This chain is Glucose transport transcription regulator RGT1 (RGT1), found in Saccharomyces cerevisiae (strain RM11-1a) (Baker's yeast).